A 394-amino-acid chain; its full sequence is Lipid-A-disaccharide synthase (394 aa).

The protein belongs to the LpxB family.

The enzyme catalyses a lipid X + a UDP-2-N,3-O-bis[(3R)-3-hydroxyacyl]-alpha-D-glucosamine = a lipid A disaccharide + UDP + H(+). The protein operates within bacterial outer membrane biogenesis; LPS lipid A biosynthesis. In terms of biological role, condensation of UDP-2,3-diacylglucosamine and 2,3-diacylglucosamine-1-phosphate to form lipid A disaccharide, a precursor of lipid A, a phosphorylated glycolipid that anchors the lipopolysaccharide to the outer membrane of the cell. This Synechocystis sp. (strain ATCC 27184 / PCC 6803 / Kazusa) protein is Lipid-A-disaccharide synthase (lpxB).